Here is a 600-residue protein sequence, read N- to C-terminus: Proline--tRNA ligase (600 aa).

It belongs to the class-II aminoacyl-tRNA synthetase family. ProS type 1 subfamily. Homodimer.

It is found in the cytoplasm. It catalyses the reaction tRNA(Pro) + L-proline + ATP = L-prolyl-tRNA(Pro) + AMP + diphosphate. Its function is as follows. Catalyzes the attachment of proline to tRNA(Pro) in a two-step reaction: proline is first activated by ATP to form Pro-AMP and then transferred to the acceptor end of tRNA(Pro). As ProRS can inadvertently accommodate and process non-cognate amino acids such as alanine and cysteine, to avoid such errors it has two additional distinct editing activities against alanine. One activity is designated as 'pretransfer' editing and involves the tRNA(Pro)-independent hydrolysis of activated Ala-AMP. The other activity is designated 'posttransfer' editing and involves deacylation of mischarged Ala-tRNA(Pro). The misacylated Cys-tRNA(Pro) is not edited by ProRS. The chain is Proline--tRNA ligase from Prochlorococcus marinus (strain MIT 9215).